We begin with the raw amino-acid sequence, 173 residues long: ATP synthase subunit b (173 aa).

A helical transmembrane segment spans residues 12–32 (LDVNPGLVVWTLVTFLVVVLV).

The protein belongs to the ATPase B chain family. F-type ATPases have 2 components, F(1) - the catalytic core - and F(0) - the membrane proton channel. F(1) has five subunits: alpha(3), beta(3), gamma(1), delta(1), epsilon(1). F(0) has three main subunits: a(1), b(2) and c(10-14). The alpha and beta chains form an alternating ring which encloses part of the gamma chain. F(1) is attached to F(0) by a central stalk formed by the gamma and epsilon chains, while a peripheral stalk is formed by the delta and b chains.

It localises to the cell inner membrane. Functionally, f(1)F(0) ATP synthase produces ATP from ADP in the presence of a proton or sodium gradient. F-type ATPases consist of two structural domains, F(1) containing the extramembraneous catalytic core and F(0) containing the membrane proton channel, linked together by a central stalk and a peripheral stalk. During catalysis, ATP synthesis in the catalytic domain of F(1) is coupled via a rotary mechanism of the central stalk subunits to proton translocation. Component of the F(0) channel, it forms part of the peripheral stalk, linking F(1) to F(0). This chain is ATP synthase subunit b, found in Leptospira interrogans serogroup Icterohaemorrhagiae serovar copenhageni (strain Fiocruz L1-130).